A 91-amino-acid chain; its full sequence is Cell division topological specificity factor (91 aa).

Belongs to the MinE family.

In terms of biological role, prevents the cell division inhibition by proteins MinC and MinD at internal division sites while permitting inhibition at polar sites. This ensures cell division at the proper site by restricting the formation of a division septum at the midpoint of the long axis of the cell. The polypeptide is Cell division topological specificity factor (Thermoanaerobacter pseudethanolicus (strain ATCC 33223 / 39E) (Clostridium thermohydrosulfuricum)).